Here is a 512-residue protein sequence, read N- to C-terminus: Glutathione-binding protein GsiB (512 aa).

An N-terminal signal peptide occupies residues 1–26; sequence MARAVHRSGLVALGIATALMASCAFA.

This sequence belongs to the bacterial solute-binding protein 5 family. The complex is composed of two ATP-binding proteins (GsiA), two transmembrane proteins (GsiC and GsiD) and a solute-binding protein (GsiB). In the presence of glutathione, interacts with the transmembrane proteins GsiC and GsiD.

Its subcellular location is the periplasm. In terms of biological role, part of the ABC transporter complex GsiABCD involved in glutathione import. Binds glutathione. This Escherichia coli (strain K12) protein is Glutathione-binding protein GsiB.